We begin with the raw amino-acid sequence, 96 residues long: Large ribosomal subunit protein eL43 (96 aa).

A C4-type zinc finger spans residues cysteine 41–cysteine 62.

The protein belongs to the eukaryotic ribosomal protein eL43 family. It depends on Zn(2+) as a cofactor.

The protein is Large ribosomal subunit protein eL43 of Methanococcus vannielii (strain ATCC 35089 / DSM 1224 / JCM 13029 / OCM 148 / SB).